A 103-amino-acid polypeptide reads, in one-letter code: Large ribosomal subunit protein bL21 (103 aa).

This sequence belongs to the bacterial ribosomal protein bL21 family. In terms of assembly, part of the 50S ribosomal subunit. Contacts protein L20.

Its function is as follows. This protein binds to 23S rRNA in the presence of protein L20. In Kocuria rhizophila (strain ATCC 9341 / DSM 348 / NBRC 103217 / DC2201), this protein is Large ribosomal subunit protein bL21.